Here is a 431-residue protein sequence, read N- to C-terminus: 4-hydroxy-3-methylbut-2-en-1-yl diphosphate synthase (flavodoxin) (431 aa).

The segment at 1 to 21 is disordered; it reads MNKLENPSQRDVAGPSPRHKT. 4 residues coordinate [4Fe-4S] cluster: C310, C313, C356, and E363.

Belongs to the IspG family. Requires [4Fe-4S] cluster as cofactor.

It catalyses the reaction (2E)-4-hydroxy-3-methylbut-2-enyl diphosphate + oxidized [flavodoxin] + H2O + 2 H(+) = 2-C-methyl-D-erythritol 2,4-cyclic diphosphate + reduced [flavodoxin]. The protein operates within isoprenoid biosynthesis; isopentenyl diphosphate biosynthesis via DXP pathway; isopentenyl diphosphate from 1-deoxy-D-xylulose 5-phosphate: step 5/6. Functionally, converts 2C-methyl-D-erythritol 2,4-cyclodiphosphate (ME-2,4cPP) into 1-hydroxy-2-methyl-2-(E)-butenyl 4-diphosphate. The polypeptide is 4-hydroxy-3-methylbut-2-en-1-yl diphosphate synthase (flavodoxin) (Nitrobacter hamburgensis (strain DSM 10229 / NCIMB 13809 / X14)).